Here is a 236-residue protein sequence, read N- to C-terminus: Alpha-tubulin N-acetyltransferase (236 aa).

The N-acetyltransferase domain occupies 21–201 (ASVPDGVSRW…NKFVVFHGFF (181 aa)). Acetyl-CoA contacts are provided by residues 134 to 147 (FYVD…GYGK) and 171 to 180 (SDKLLGFMKK). Residues 217–236 (SPTGAAAAATGTKAKNEMPG) are disordered. Positions 219-229 (TGAAAAATGTK) are enriched in low complexity.

It belongs to the acetyltransferase ATAT1 family.

It carries out the reaction L-lysyl-[alpha-tubulin] + acetyl-CoA = N(6)-acetyl-L-lysyl-[alpha-tubulin] + CoA + H(+). Functionally, specifically acetylates 'Lys-40' in alpha-tubulin on the lumenal side of microtubules. Promotes microtubule destabilization and accelerates microtubule dynamics; this activity may be independent of acetylation activity. Acetylates alpha-tubulin with a slow enzymatic rate, due to a catalytic site that is not optimized for acetyl transfer. Enters the microtubule through each end and diffuses quickly throughout the lumen of microtubules. Acetylates only long/old microtubules because of its slow acetylation rate since it does not have time to act on dynamically unstable microtubules before the enzyme is released. This chain is Alpha-tubulin N-acetyltransferase, found in Leishmania braziliensis.